We begin with the raw amino-acid sequence, 111 residues long: Phosphoribosyl-ATP pyrophosphatase (111 aa).

It belongs to the PRA-PH family.

It localises to the cytoplasm. The catalysed reaction is 1-(5-phospho-beta-D-ribosyl)-ATP + H2O = 1-(5-phospho-beta-D-ribosyl)-5'-AMP + diphosphate + H(+). Its pathway is amino-acid biosynthesis; L-histidine biosynthesis; L-histidine from 5-phospho-alpha-D-ribose 1-diphosphate: step 2/9. This chain is Phosphoribosyl-ATP pyrophosphatase, found in Pseudomonas paraeruginosa (strain DSM 24068 / PA7) (Pseudomonas aeruginosa (strain PA7)).